An 855-amino-acid polypeptide reads, in one-letter code: Sucrose synthase 7 (855 aa).

The GT-B glycosyltransferase stretch occupies residues 279–758 (SIFNIVIFSI…GLQRIYECYT (480 aa)).

This sequence belongs to the glycosyltransferase 1 family. Plant sucrose synthase subfamily. In terms of tissue distribution, predominantly expressed in roots, flowers and immature seeds.

Its subcellular location is the cytoplasm. The protein resides in the membrane. It catalyses the reaction an NDP-alpha-D-glucose + D-fructose = a ribonucleoside 5'-diphosphate + sucrose + H(+). Functionally, sucrose-cleaving enzyme that provides UDP-glucose and fructose for various metabolic pathways. In Oryza sativa subsp. japonica (Rice), this protein is Sucrose synthase 7 (SUS7).